A 143-amino-acid chain; its full sequence is ATP synthase subunit b', chloroplastic (143 aa).

The helical transmembrane segment at 12-31 threads the bilayer; that stretch reads LPVMGLQVVLLSWLLEQILY.

The protein belongs to the ATPase B chain family. F-type ATPases have 2 components, F(1) - the catalytic core - and F(0) - the membrane proton channel. F(1) has five subunits: alpha(3), beta(3), gamma(1), delta(1), epsilon(1). F(0) has four main subunits: a(1), b(1), b'(1) and c(10-14). The alpha and beta chains form an alternating ring which encloses part of the gamma chain. F(1) is attached to F(0) by a central stalk formed by the gamma and epsilon chains, while a peripheral stalk is formed by the delta, b and b' chains.

The protein localises to the plastid. The protein resides in the chloroplast thylakoid membrane. Functionally, f(1)F(0) ATP synthase produces ATP from ADP in the presence of a proton or sodium gradient. F-type ATPases consist of two structural domains, F(1) containing the extramembraneous catalytic core and F(0) containing the membrane proton channel, linked together by a central stalk and a peripheral stalk. During catalysis, ATP synthesis in the catalytic domain of F(1) is coupled via a rotary mechanism of the central stalk subunits to proton translocation. Component of the F(0) channel, it forms part of the peripheral stalk, linking F(1) to F(0). The b'-subunit is a diverged and duplicated form of b found in plants and photosynthetic bacteria. In Cyanidioschyzon merolae (strain NIES-3377 / 10D) (Unicellular red alga), this protein is ATP synthase subunit b', chloroplastic.